The chain runs to 330 residues: G-protein coupled receptor 3 (330 aa).

The Extracellular portion of the chain corresponds to Met-1–Ala-42. An N-linked (GlcNAc...) asparagine glycan is attached at Asn-20. Residues Trp-43–Val-62 traverse the membrane as a helical segment. At Ala-63 to Pro-74 the chain is on the cytoplasmic side. A helical membrane pass occupies residues Met-75 to Ala-98. Residues Ala-99 to Leu-110 lie on the Extracellular side of the membrane. A helical membrane pass occupies residues Met-111 to Val-132. Residues Asp-133 to Thr-153 are Cytoplasmic-facing. A helical membrane pass occupies residues Tyr-154–Leu-173. Over Ala-174–Leu-198 the chain is Extracellular. A helical transmembrane segment spans residues Ala-199–Cys-217. Residues Arg-218–Gly-245 lie on the Cytoplasmic side of the membrane. Residues Ile-246–Ala-272 form a helical membrane-spanning segment. The Extracellular portion of the chain corresponds to Asp-273–Leu-277. A helical membrane pass occupies residues Tyr-278–Phe-299. Residues Arg-300–Val-330 are Cytoplasmic-facing. Residue Cys-313 is the site of S-palmitoyl cysteine attachment. Phosphoserine occurs at positions 324, 326, and 328.

This sequence belongs to the G-protein coupled receptor 1 family. Expressed in both the forebrain and hindbrain, with the highest level in habenula. Lower level expression in the testis. Expressed in several metabolically active peripheral tissues, although at lower levels than in the central nervous system (CNS).

The protein resides in the cell membrane. In terms of biological role, constitutively active G-protein coupled receptor that maintains high 3'-5'-cyclic adenosine monophosphate (cAMP) levels that a plays a role in serveral processes including meiotic arrest in oocytes or neuronal development via activation of numerous intracellular signaling pathways. Acts as an essential activator of thermogenic adipocytes and drives thermogenesis via its intrinsic G(s)-coupling activity without the requirement of a ligand. Has a potential role in modulating a number of brain functions, including behavioral responses to stress, amyloid-beta peptide generation in neurons. Stimulates neurite outgrowth in cerebellar granular neurons modulated via PKA, ERK, and most strongly PI3K-mediated signaling pathways. The protein is G-protein coupled receptor 3 (Gpr3) of Mus musculus (Mouse).